The sequence spans 739 residues: Vascular cell adhesion protein 1 (739 aa).

The signal sequence occupies residues 1-24 (MPGKMVVILGASNILWIMFAASQA). Ig-like C2-type domains lie at 25 to 105 (FKIE…RKLE), 109 to 212 (QVEI…TVRQ), 223 to 309 (PKNT…LIVQ), 312 to 399 (PFTV…IQVE), 408 to 506 (EIEM…QTLY), 511 to 595 (PRDT…VELI), and 600 to 684 (PKDI…LTLD). At 25 to 698 (FKIETTPESR…ENNKDYFSPE (674 aa)) the chain is on the extracellular side. 5 disulfide bridges follow: cysteine 47/cysteine 95, cysteine 52/cysteine 99, cysteine 137/cysteine 195, cysteine 246/cysteine 291, and cysteine 335/cysteine 383. Residues asparagine 273, asparagine 365, asparagine 417, asparagine 463, asparagine 531, and asparagine 561 are each glycosylated (N-linked (GlcNAc...) asparagine). A disulfide bond links cysteine 534 and cysteine 579. The chain crosses the membrane as a helical span at residues 699-720 (LLVLYFASSLIIPAIGMIIYFA). Over 721–739 (RKANMKGSYSLVEAQKSKV) the chain is Cytoplasmic.

Post-translationally, cleaved by the metalloproteinase ADAM17 to generate the soluble form. Sialoglycoprotein. In terms of processing, ubiquitinated by TRIM65 via 'Lys-48'-linked ubiquitination; leading to proteasomal degradation. As to expression, expressed on inflamed vascular endothelium, as well as on macrophage-like and dendritic cell types in both normal and inflamed tissue.

The protein resides in the cell membrane. The protein localises to the secreted. Its function is as follows. Cell adhesion glycoprotein predominantly expressed on the surface of endothelial cells that plays an important role in immune surveillance and inflammation. Acts as a major regulator of leukocyte adhesion to the endothelium through interaction with different types of integrins. During inflammatory responses, binds ligands on the surface of activated endothelial cells to initiate the activation of calcium channels and the plasma membrane-associated small GTPase RAC1 leading to leukocyte transendothelial migration. Also serves as a quality-control checkpoint for entry into bone marrow by providing a 'don't-eat-me' stamping in the context of major histocompatibility complex (MHC) class-I presentation. This Homo sapiens (Human) protein is Vascular cell adhesion protein 1 (VCAM1).